We begin with the raw amino-acid sequence, 231 residues long: Transmembrane protein 225 (231 aa).

Residues 1–13 lie on the Cytoplasmic side of the membrane; the sequence is MMRIPNRSIQAAN. Residues 14-34 form a helical membrane-spanning segment; sequence IFFSSGAILLLIAGLIMENWV. Residues 35–71 are Extracellular-facing; that stretch reads ELIPKVRKDKVTHSPWLGCCPPFWPEESLEAIRRMMM. Residues 72 to 92 traverse the membrane as a helical segment; sequence MSLNISIYLNLIIGLQFTYMI. The Cytoplasmic portion of the chain corresponds to 93–99; that stretch reads SQNKCVH. Residues 100-120 form a helical membrane-spanning segment; it reads LLIGFLSFFTGCLLFYAIIVY. Topologically, residues 121–139 are extracellular; it reads HHKLNKGQYVYFVNYKTKW. Residues 140-160 form a helical membrane-spanning segment; sequence IVFTIYLTIALFLTCGIFSFI. Residues 161–231 are Cytoplasmic-facing; it reads QCTNRCACMK…LQSRRVTWAL (71 aa). Residues 225–229 carry the RVxF motif; it reads RRVTW.

In terms of assembly, interacts (via RVxF motif) with PPP1CC. Expressed in testis, specifically in spermatocytes and round spermatids.

The protein localises to the cytoplasmic vesicle. The protein resides in the secretory vesicle. It is found in the acrosome membrane. In terms of biological role, probably inhibits protein phosphatase 1 (PP1) in sperm via binding to catalytic subunit PPP1CC. In Rattus norvegicus (Rat), this protein is Transmembrane protein 225 (Tmem225).